Consider the following 363-residue polypeptide: Protein-glutamate methylesterase/protein-glutamine glutaminase 3 (363 aa).

Residues 8 to 125 (KVLCVDDSAL…RDGMLDYAEK (118 aa)) form the Response regulatory domain. At aspartate 59 the chain carries 4-aspartylphosphate. The region spanning 164-356 (LVSTEKLIII…RRVMARLATM (193 aa)) is the CheB-type methylesterase domain. Residues serine 176, histidine 202, and aspartate 298 contribute to the active site.

It belongs to the CheB family. Phosphorylated by CheA. Phosphorylation of the N-terminal regulatory domain activates the methylesterase activity.

The protein resides in the cytoplasm. It catalyses the reaction [protein]-L-glutamate 5-O-methyl ester + H2O = L-glutamyl-[protein] + methanol + H(+). The enzyme catalyses L-glutaminyl-[protein] + H2O = L-glutamyl-[protein] + NH4(+). Involved in chemotaxis. Part of a chemotaxis signal transduction system that modulates chemotaxis in response to various stimuli. Catalyzes the demethylation of specific methylglutamate residues introduced into the chemoreceptors (methyl-accepting chemotaxis proteins or MCP) by CheR. Also mediates the irreversible deamidation of specific glutamine residues to glutamic acid. In Burkholderia lata (strain ATCC 17760 / DSM 23089 / LMG 22485 / NCIMB 9086 / R18194 / 383), this protein is Protein-glutamate methylesterase/protein-glutamine glutaminase 3.